Consider the following 342-residue polypeptide: Nuclear distribution protein nudE homolog 1 (342 aa).

The stretch at 45-189 (REYEAELETQ…ELAVQQKQEK (145 aa)) forms a coiled coil. An interaction with PAFAH1B1 region spans residues 89-157 (EWYRQVSALE…ERNAFLESEL (69 aa)). Disordered stretches follow at residues 182–203 (AVQQ…TERT) and 320–342 (GTRP…KMLL). Polar residues predominate over residues 322-342 (RPSSTPGPMSHPSQSVVKMLL).

It belongs to the nudE family. In terms of assembly, self-associates. Interacts with PAFAH1B1. In terms of processing, phosphorylated in mitosis.

Its subcellular location is the cytoplasm. The protein localises to the cytoskeleton. The protein resides in the microtubule organizing center. It is found in the centrosome. It localises to the spindle. Its subcellular location is the chromosome. The protein localises to the centromere. The protein resides in the kinetochore. It is found in the cleavage furrow. It localises to the cytoplasmic vesicle membrane. Its function is as follows. Required for centrosome duplication and formation and function of the mitotic spindle. The chain is Nuclear distribution protein nudE homolog 1 (NDE1) from Gallus gallus (Chicken).